Here is a 128-residue protein sequence, read N- to C-terminus: Probable 4-amino-4-deoxy-L-arabinose-phosphoundecaprenol flippase subunit ArnF (128 aa).

The Cytoplasmic segment spans residues 1-2; the sequence is MG. The helical transmembrane segment at 3-23 threads the bilayer; sequence LMWGLFSVIIASAAQLSLGFA. Residues 24 to 32 are Periplasmic-facing; sequence ASHLPPMTH. A helical transmembrane segment spans residues 33 to 53; that stretch reads LWDFIAALLAFGLDARILLLG. Over 54-76 the chain is Cytoplasmic; that stretch reads LQGYLLSVFCWYKTLHKLALSKA. The helical transmembrane segment at 77-97 threads the bilayer; the sequence is YALLSMSYVLVWIASMVLPGW. Over 98–100 the chain is Periplasmic; it reads EGT. Residues 101–121 traverse the membrane as a helical segment; it reads FSLKALLGVACIMSGLMLIFL. Topologically, residues 122–128 are cytoplasmic; the sequence is PTTKQRY.

It belongs to the ArnF family. As to quaternary structure, heterodimer of ArnE and ArnF.

It localises to the cell inner membrane. It functions in the pathway bacterial outer membrane biogenesis; lipopolysaccharide biosynthesis. In terms of biological role, translocates 4-amino-4-deoxy-L-arabinose-phosphoundecaprenol (alpha-L-Ara4N-phosphoundecaprenol) from the cytoplasmic to the periplasmic side of the inner membrane. The protein is Probable 4-amino-4-deoxy-L-arabinose-phosphoundecaprenol flippase subunit ArnF of Escherichia coli O7:K1 (strain IAI39 / ExPEC).